Consider the following 198-residue polypeptide: Cyclin-dependent kinase inhibitor 1B (198 aa).

Positions 1–11 (MSNVRVSNGSP) are enriched in polar residues. Residues 1 to 34 (MSNVRVSNGSPSLERMDARQAEHPKPSACRNLFG) are disordered. S10 carries the phosphoserine; by UHMK1 modification. The segment covering 14–25 (ERMDARQAEHPK) has biased composition (basic and acidic residues). The interval 51-91 (DMEEASQRKWNFDFQNHKPLEGKYEWQEVEKGSLPEFYYRP) is interaction with CDK2. Y74 carries the phosphotyrosine; by SRC modification. The segment at 85-198 (PEFYYRPPRP…KKPGLRRRQT (114 aa)) is disordered. At Y88 the chain carries Phosphotyrosine; by ABL, LYN, SRC and JAK2. Y89 carries the phosphotyrosine modification. Positions 126–137 (EDTHLVDPKTDP) are enriched in basic and acidic residues. Positions 153–169 (KRPATDDSSTQNKRANR) match the Nuclear localization signal motif. Position 157 is a phosphothreonine; by CaMK1, PKB/AKT1 and PIM1 (T157). T170 carries the post-translational modification Phosphothreonine. Residues 175–186 (SDGSPNAGSVEQ) are compositionally biased toward polar residues. T187 is subject to Phosphothreonine; by PKB/AKT1, CDK1 and CDK2. The residue at position 198 (T198) is a Phosphothreonine; by CaMK1, PKB/AKT1, RPS6KA1, RPS6KA3 and PIM1.

This sequence belongs to the CDI family. As to quaternary structure, forms a ternary complex composed of CCNE1, CDK2 and CDKN1B. Interacts directly with CCNE1; the interaction is inhibited by CDK2-dependent phosphorylation on Thr-187. Interacts with COPS5, subunit of the COP9 signalosome complex; the interaction leads to CDKN1B degradation. Interacts with NUP50; the interaction leads to nuclear import and degradation of phosphorylated CDKN1B. Interacts with CCND1 and SNX6. Interacts (Thr-198-phosphorylated form) with 14-3-3 proteins, binds strongly YWHAQ, weakly YWHAE and YWHAH, but not YWHAB nor YWHAZ; the interaction with YWHAQ results in translocation to the cytoplasm. Interacts with AKT1 and LYN; the interactions lead to cytoplasmic mislocation, phosphorylation of CDKN1B and inhibition of cell cycle arrest. Forms a ternary complex with CCNA2 and CDK2; CDKN1B inhibits the kinase activity of CDK2 through conformational rearrangements. Interacts (unphosphorylated form) with CDK2. Forms a complex with CDK2 and SPDYA, but does not directly interact with SPDYA. Forms a ternary complex composed of cyclin D, CDK4 and CDKN1B. Interacts (phosphorylated on Tyr-88 and Tyr-89) with CDK4; the interaction is required for cyclin D and CDK4 complex assembly, induces nuclear translocation and activates the CDK4 kinase activity. Interacts with GRB2. Interacts with PIM1. Identified in a complex with SKP1, SKP2 and CKS1B. Interacts with UHMK1; the interaction leads to cytoplasmic mislocation, phosphorylation of CDKN1B and inhibition of cell cycle arrest. Also interacts with CDK1. Dephosphorylated on Thr-187 by PPM1H, leading to CDKN1B stability. Interacts with HSPA8; the interaction may be associated with susceptibility to ubiquitination. Post-translationally, phosphorylated; phosphorylation occurs on serine, threonine and tyrosine residues. Phosphorylation on Ser-10 is the major site of phosphorylation in resting cells, takes place at the G(0)-G(1) phase and leads to protein stability. Phosphorylation on other sites is greatly enhanced by mitogens, growth factors, cMYC and in certain cancer cell lines. The phosphorylated form found in the cytoplasm is inactivate. Phosphorylation on Thr-198 is required for interaction with 14-3-3 proteins. Phosphorylation on Thr-187, by CDK1 and CDK2 leads to protein ubiquitination and proteasomal degradation. Tyrosine phosphorylation promotes this process. Phosphorylation by PKB/AKT1 can be suppressed by LY294002, an inhibitor of the catalytic subunit of PI3K. Phosphorylation on Tyr-88 and Tyr-89 has no effect on binding CDK2, but is required for binding CDK4. Dephosphorylated on tyrosine residues by G-CSF. In terms of processing, ubiquitinated; in the cytoplasm by the KPC complex (composed of RNF123/KPC1 and UBAC1/KPC2) and, in the nucleus, by SCF(SKP2). The latter requires prior phosphorylation on Thr-187. Ubiquitinated; by a TRIM21-containing SCF(SKP2)-like complex; leads to its degradation. Subject to degradation in the lysosome. Interaction with SNX6 promotes lysosomal degradation. As to expression, expressed in kidney (at protein level). Expressed in all tissues tested. Highest levels in skeletal muscle, lowest in liver and kidney.

It localises to the nucleus. It is found in the cytoplasm. The protein localises to the endosome. Functionally, important regulator of cell cycle progression. Inhibits the kinase activity of CDK2 bound to cyclin A, but has little inhibitory activity on CDK2 bound to SPDYA. Involved in G1 arrest. Potent inhibitor of cyclin E- and cyclin A-CDK2 complexes. Forms a complex with cyclin type D-CDK4 complexes and is involved in the assembly, stability, and modulation of CCND1-CDK4 complex activation. Acts either as an inhibitor or an activator of cyclin type D-CDK4 complexes depending on its phosphorylation state and/or stoichometry. The sequence is that of Cyclin-dependent kinase inhibitor 1B from Homo sapiens (Human).